A 634-amino-acid polypeptide reads, in one-letter code: Chaperone protein HtpG (634 aa).

The segment at 1 to 342 (MTVASHKETL…SNDLPLNISR (342 aa)) is a; substrate-binding. The segment at 343 to 559 (EILQNNRVID…QHDMSGYLER (217 aa)) is b. The interval 560 to 634 (LLKEAGQQAP…LNSLLLAMAD (75 aa)) is c.

It belongs to the heat shock protein 90 family. In terms of assembly, homodimer.

The protein localises to the cytoplasm. Functionally, molecular chaperone. Has ATPase activity. The sequence is that of Chaperone protein HtpG from Nitrosococcus oceani (strain ATCC 19707 / BCRC 17464 / JCM 30415 / NCIMB 11848 / C-107).